Here is a 365-residue protein sequence, read N- to C-terminus: DNA replication and repair protein RecF (365 aa).

30 to 37 (GRNAQGKT) contacts ATP.

This sequence belongs to the RecF family.

It is found in the cytoplasm. In terms of biological role, the RecF protein is involved in DNA metabolism; it is required for DNA replication and normal SOS inducibility. RecF binds preferentially to single-stranded, linear DNA. It also seems to bind ATP. In Streptococcus pneumoniae (strain 70585), this protein is DNA replication and repair protein RecF.